A 323-amino-acid chain; its full sequence is MELFKRTRILSFMRYSNYGVIVSAILALLALGLLFFKGFSLGIDFAGGSLVQVRYTQNAPIKEVRDLFEKEARFKGVQVSEFGSKEEILIKFPFVETAENEDLNAIVANILKPSGDFEIRKFDTVGPRVGSELKEKGILSLILALIAIMVYVSFRYEWRFALASVIALVHDVILVASSVIVFKIDMNLEVIAALLTLIGYSINDTIIIFDRIREEMLSQKTKNATQAIDEAISSTLTRTLLTSLTVFFVVLILCVFGSKIIIGFSLPMLIGTIVGTYSSIFIAPKVALLLGFDMDKYYENETRKIKKAQEKEKMRRLYESGQV.

Helical transmembrane passes span 19 to 39 (GVIVSAILALLALGLLFFKGF), 138 to 158 (ILSLILALIAIMVYVSFRYEW), 162 to 182 (LASVIALVHDVILVASSVIVF), 189 to 209 (EVIAALLTLIGYSINDTIIIF), 244 to 264 (LTVFFVVLILCVFGSKIIIGF), and 269 to 289 (LIGTIVGTYSSIFIAPKVALL).

It belongs to the SecD/SecF family. SecF subfamily. Forms a complex with SecD. Part of the essential Sec protein translocation apparatus which comprises SecA, SecYEG and auxiliary proteins SecDF-YajC and YidC.

The protein localises to the cell inner membrane. Functionally, part of the Sec protein translocase complex. Interacts with the SecYEG preprotein conducting channel. SecDF uses the proton motive force (PMF) to complete protein translocation after the ATP-dependent function of SecA. The chain is Protein translocase subunit SecF from Helicobacter pylori (strain ATCC 700392 / 26695) (Campylobacter pylori).